The sequence spans 159 residues: Small ribosomal subunit protein uS17x (159 aa).

It belongs to the universal ribosomal protein uS17 family.

It localises to the cytoplasm. This Arabidopsis thaliana (Mouse-ear cress) protein is Small ribosomal subunit protein uS17x (RPS11C).